The sequence spans 1160 residues: MSPNNQNEYEIIDALSPTSVSDNSIRYPLANDQTNTLQNMNYKDYLKMTESTNAELSRNPGTFISAQDAVGTGIDIVSTIISGLGIPVLGEVFSILGSLIGLLWPSNNENVWQIFMNRVEELIDQKILDSVRSRAIADLANSRIAVEYYQNALEDWRKNPHSTRSAALVKERFGNAEAILRTNMGSFSQTNYETPLLPTYAQAASLHLLVMRDVQIYGKEWGYPQNDIDLFYKEQVSYTARYSDHCVQWYNAGLNKLRGTGAKQWVDYNRFRREMNVMVLDLVALFPNYDARIYPLETNAELTREIFTDPVGSYVTGQSSTLISWYDMIPAALPSFSTLENLLRKPDFFTLLQEIRMYTSFRQNGTIEYYNYWGGQRLTLSYIYGSSFNKYSGVLAGAEDIIPVGQNDIYRVVWTYIGRYTNSLLGVNPVTFYFSNNTQKTYSKPKQFAGGIKTIDSGEELTYENYQSYSHRVSYITSFEIKSTGGTVLGVVPIFGWTHSSASRNNFIYATKISQIPINKASRTSGGAVWNFQEGLYNGGPVMKLSGSGSQVINLRVATDAKGASQRYRIRIRYASDRAGKFTISSRSPENPATYSASIAYTNTMSTNASLTYSTFAYAESGPINLGISGSSRTFDISITKEAGAANLYIDRIEFIPVNTLFEAEEDLDVAKKAVNGLFTNEKDALQTSVTDYQVNQAANLIECLSDELYPNEKRMLWDAVKEAKRLVQARNLLQDTGFNRINGENGWTGSTGIEVVEGDVLFKDRSLRLTSAREIDTETYPTYLYQQIDESLLKPYTRYKLKGFIGSSQDLEIKLIRHRANQIVKNVPDNLLPDVRPVNSCGGVDRCSEQQYVDANLALENNGENGNMSSDSHAFSFHIDTGEIDLNENTGIWIVFKIPTTNGNATLGNLEFVEEGPLSGETLEWAQQQEQQWQDKMARKRAASEKTYYAAKQAIDRLFADYQDQKLNSGVEMSDLLAAQNLVQSIPYVYNDALPEIPGMNYTSFTELTNRLQQAWNLYDLQNAIPNGDFRNGLSNWNATSDVNVQQLSDTSVLVIPNWNSQVSQQFTVQPNYRYVLRVTARKEGVGDGYVIIRDGANQTETLTFNICDDDTGVLSTDQTSYITKTVEFTPSTEQVWIDMSETEGVFNIESVELVLEEE.

It belongs to the delta endotoxin family.

Functionally, promotes colloidosmotic lysis by binding to the midgut epithelial cells of insects. Active on various scarabaeid beetles such as Anomala cuprea, A.rufocuprea and Popillia japonica. The protein is Pesticidal crystal protein Cry8Ca (cry8Ca) of Bacillus thuringiensis subsp. japonensis.